The sequence spans 172 residues: Trypsin inhibitor 1B (172 aa).

Disulfide bonds link cysteine 40/cysteine 84 and cysteine 133/cysteine 139.

The protein belongs to the protease inhibitor I3 (leguminous Kunitz-type inhibitor) family.

Functionally, WTI-1B inhibits trypsin stoichiometrically. The polypeptide is Trypsin inhibitor 1B (Psophocarpus tetragonolobus (Winged bean)).